A 123-amino-acid polypeptide reads, in one-letter code: Small ribosomal subunit protein uS12cz/uS12cy (123 aa).

This sequence belongs to the universal ribosomal protein uS12 family. In terms of assembly, part of the 30S ribosomal subunit.

The protein localises to the plastid. It localises to the chloroplast. Its function is as follows. With S4 and S5 plays an important role in translational accuracy. Located at the interface of the 30S and 50S subunits. The polypeptide is Small ribosomal subunit protein uS12cz/uS12cy (rps12-A) (Phaseolus vulgaris (Kidney bean)).